A 670-amino-acid chain; its full sequence is Transketolase, chromosomal (670 aa).

H32 provides a ligand contact to substrate. Residues H72 and 120–122 (GPL) contribute to the thiamine diphosphate site. D161 provides a ligand contact to Mg(2+). Residues G162 and N191 each contribute to the thiamine diphosphate site. Mg(2+) contacts are provided by N191 and I193. The substrate site is built by H267, R364, and S391. H267 contacts thiamine diphosphate. E417 (proton donor) is an active-site residue. Residue F443 coordinates thiamine diphosphate. Substrate is bound by residues H467, D475, and R526.

It belongs to the transketolase family. As to quaternary structure, homodimer. The cofactor is Mg(2+). Ca(2+) serves as cofactor. Requires Mn(2+) as cofactor. Co(2+) is required as a cofactor. It depends on thiamine diphosphate as a cofactor.

It catalyses the reaction D-sedoheptulose 7-phosphate + D-glyceraldehyde 3-phosphate = aldehydo-D-ribose 5-phosphate + D-xylulose 5-phosphate. Its pathway is carbohydrate biosynthesis; Calvin cycle. In terms of biological role, catalyzes the transfer of a two-carbon ketol group from a ketose donor to an aldose acceptor, via a covalent intermediate with the cofactor thiamine pyrophosphate. This is Transketolase, chromosomal (cbbTC) from Cupriavidus necator (strain ATCC 17699 / DSM 428 / KCTC 22496 / NCIMB 10442 / H16 / Stanier 337) (Ralstonia eutropha).